The primary structure comprises 441 residues: MTGEKLLYIETFGCQMNVSDSEKVASLLRGEGYSQTPDSSEADLIIVNTCSVRAKAEHKVYSYLGRFRKLKRDRRLLLGVGGCVAQQEGERLLKRVPWLDLVFGTHNLHLLPEMVRAAEQGERRAAVDFIDNEARLDLFPQADEGGGVTRFVTVMQGCDNFCSYCIVPYVRGREISRRSVEIIGEIRSAVAGGVREVTLLGQNVNSYGLKTPGELSFAGLLREISAIDGLERIRFTTSHPKDISPELIACFAELPKLCGHIHLPAQAGSDSILARMNRGYTRQEYLEKVAALRAARPEILITGDIIVGFPGETEADFLQTLSLMEEVRYTDIFSFAYSPRPETAAASLGDRIMRKETTERLERVQGLQRDMTIERHAGFVGTCQAVLVEGMSKRGDQLYGRTDGNLIVNFAGNPSLAGSLVDVRITRGYPNSLLGELAVFQ.

Residues 5–120 form the MTTase N-terminal domain; sequence KLLYIETFGC…LPEMVRAAEQ (116 aa). Cys14, Cys50, Cys83, Cys158, Cys162, and Cys165 together coordinate [4Fe-4S] cluster. The region spanning 144 to 374 is the Radical SAM core domain; sequence EGGGVTRFVT…QGLQRDMTIE (231 aa). One can recognise a TRAM domain in the interval 377–439; it reads AGFVGTCQAV…PNSLLGELAV (63 aa).

This sequence belongs to the methylthiotransferase family. MiaB subfamily. As to quaternary structure, monomer. The cofactor is [4Fe-4S] cluster.

The protein localises to the cytoplasm. It carries out the reaction N(6)-dimethylallyladenosine(37) in tRNA + (sulfur carrier)-SH + AH2 + 2 S-adenosyl-L-methionine = 2-methylsulfanyl-N(6)-dimethylallyladenosine(37) in tRNA + (sulfur carrier)-H + 5'-deoxyadenosine + L-methionine + A + S-adenosyl-L-homocysteine + 2 H(+). Functionally, catalyzes the methylthiolation of N6-(dimethylallyl)adenosine (i(6)A), leading to the formation of 2-methylthio-N6-(dimethylallyl)adenosine (ms(2)i(6)A) at position 37 in tRNAs that read codons beginning with uridine. This chain is tRNA-2-methylthio-N(6)-dimethylallyladenosine synthase, found in Geobacter metallireducens (strain ATCC 53774 / DSM 7210 / GS-15).